We begin with the raw amino-acid sequence, 110 residues long: Small ribosomal subunit protein bS6 (110 aa).

Belongs to the bacterial ribosomal protein bS6 family.

Functionally, binds together with bS18 to 16S ribosomal RNA. This Aquifex aeolicus (strain VF5) protein is Small ribosomal subunit protein bS6 (rpsF).